The primary structure comprises 246 residues: Ribosome maturation factor RimM (246 aa).

Positions methionine 1–glutamine 15 are enriched in basic and acidic residues. The interval methionine 1–aspartate 63 is disordered. Pro residues predominate over residues valine 45–asparagine 54. Residues glycine 158–leucine 239 enclose the PRC barrel domain.

This sequence belongs to the RimM family. As to quaternary structure, binds ribosomal protein uS19.

It localises to the cytoplasm. Its function is as follows. An accessory protein needed during the final step in the assembly of 30S ribosomal subunit, possibly for assembly of the head region. Essential for efficient processing of 16S rRNA. May be needed both before and after RbfA during the maturation of 16S rRNA. It has affinity for free ribosomal 30S subunits but not for 70S ribosomes. This Nostoc sp. (strain PCC 7120 / SAG 25.82 / UTEX 2576) protein is Ribosome maturation factor RimM.